We begin with the raw amino-acid sequence, 429 residues long: Aspartate--tRNA(Asp/Asn) ligase (429 aa).

Glu-167 lines the L-aspartate pocket. Positions 189–192 (QLYK) are aspartate. Arg-210 serves as a coordination point for L-aspartate. ATP contacts are provided by residues 210–212 (RAE) and Glu-352. 2 residues coordinate Mg(2+): Glu-352 and Ser-355. Residues Ser-355 and Arg-359 each contribute to the L-aspartate site. 400–403 (GLAR) provides a ligand contact to ATP.

It belongs to the class-II aminoacyl-tRNA synthetase family. Type 2 subfamily. In terms of assembly, homodimer. It depends on Mg(2+) as a cofactor.

The protein localises to the cytoplasm. The enzyme catalyses tRNA(Asx) + L-aspartate + ATP = L-aspartyl-tRNA(Asx) + AMP + diphosphate. Its function is as follows. Aspartyl-tRNA synthetase with relaxed tRNA specificity since it is able to aspartylate not only its cognate tRNA(Asp) but also tRNA(Asn). Reaction proceeds in two steps: L-aspartate is first activated by ATP to form Asp-AMP and then transferred to the acceptor end of tRNA(Asp/Asn). The chain is Aspartate--tRNA(Asp/Asn) ligase from Sulfurisphaera tokodaii (strain DSM 16993 / JCM 10545 / NBRC 100140 / 7) (Sulfolobus tokodaii).